Consider the following 508-residue polypeptide: Cobalamin biosynthesis protein CobIJ (508 aa).

A precorrin-2 C20-methyltransferase region spans residues 1–243; the sequence is MSARGTLWGV…AMLPGGRRRA (243 aa). The segment at 244-508 is precorrin-3 methylase; it reads LLTGTVAVVG…TATKSSRHSD (265 aa). The segment at 489 to 508 is disordered; that stretch reads PRRYPEAGRATATKSSRHSD.

It belongs to the precorrin methyltransferase family.

It carries out the reaction precorrin-2 + S-adenosyl-L-methionine = precorrin-3A + S-adenosyl-L-homocysteine + H(+). It catalyses the reaction precorrin-3B + S-adenosyl-L-methionine = precorrin-4 + S-adenosyl-L-homocysteine + 3 H(+). It functions in the pathway cofactor biosynthesis; adenosylcobalamin biosynthesis; cob(II)yrinate a,c-diamide from precorrin-2 (aerobic route): step 1/10. Its pathway is cofactor biosynthesis; adenosylcobalamin biosynthesis; cob(II)yrinate a,c-diamide from precorrin-2 (aerobic route): step 3/10. In terms of biological role, methylates precorrin-2 at the C-20 position to produce precorrin-3A. The protein is Cobalamin biosynthesis protein CobIJ (cobIJ) of Mycobacterium bovis (strain ATCC BAA-935 / AF2122/97).